The following is an 857-amino-acid chain: MLTKRFYNLAIMQDISNHTPMIQQYLKIKSQYQDILLFYRMGDFYELFFDDAKKAAELLDITLTARGKSNGESIPMAGVPYHAAEAYIAKIVKKGLSIAICEQTGDPNTSKGPVERQVTRIITPATVSEEAFLDNNQDSILVSIFEKNNKYYLAYTSYTQGKIYLVKTLTSLNELKNTVLKLSPQEIITNSRELAQQNPFKKPIKALEEWYYSNFEAKKYINDSLDTNIANNILNLYKNDQLTTIGSILSYLTNILKDTPRHITDISYEQEQDTLNIDINSRINLELDNNSKSSLLSIIGKCKTSLGSRLLKRYFSNPTRNLNILATRHSIINSLGENQHFLKIQDVLSYISDIERIISRVALGTVKPKDLVALRDSLEQLPILKKLLSEKNTPEITNINNRIHQLDELVTLLDKAIIENPPTTIRDGGVIKEGFDKELDELKSIKDNSYDFLIKFEELQKQKTGISTLKVGYNSVHGYYIELSKQHADKIPTEYVRRQTLKASERYITEELKNFEDKVLSSKEKALAREKLIYDTLLKKVIEYYKQIQETAASIAEIDVLANFAERAIKLKLSQPKFNNLAKLELKEVRHLAIEHNIDEPFIPNDTLLSKDTNTLQIITGPNMGGKSTYMRQVAQLIFLAYIGSFVPASYADICDIDTIYTRIGASDDISSGRSTFMVEMTETAYILNNASAKSLVIMDEIGRGTSTFDGLALAKACAEKFAQIGAFTLFATHYFELTELAKQYPNVCNIHFEAKEYKDNIYFMHKAVTGAAKKSYGIQVAKLAGISQDVLESAKQNLYNLEKKQQLTESTQVQAQFQLEPTTQNPLQQKLDAIDINTITPLEALNILFELKKTLI.

ATP is bound at residue 621 to 628 (GPNMGGKS).

Belongs to the DNA mismatch repair MutS family.

Its function is as follows. This protein is involved in the repair of mismatches in DNA. It is possible that it carries out the mismatch recognition step. This protein has a weak ATPase activity. This chain is DNA mismatch repair protein MutS, found in Francisella tularensis subsp. tularensis (strain SCHU S4 / Schu 4).